A 71-amino-acid chain; its full sequence is MAGMALARAWKQMSWFYYQYLLVTALYMLEPWERTVFNSMLVSIVGMALYTGYVFMPQHIMAILHYFEIVQ.

Residues Met1 to Gln12 lie on the Cytoplasmic side of the membrane. The helical transmembrane segment at Met13–Leu29 threads the bilayer. At Glu30–Arg34 the chain is on the lumenal side. The chain crosses the membrane as a helical span at residues Thr35–Pro57. Residues Gln58–Gln71 lie on the Cytoplasmic side of the membrane.

This sequence belongs to the SPTSS family. SPTSSA subfamily. Component of the serine palmitoyltransferase (SPT) complex, which is composed of SPTLC1, SPTLC2 or SPTLC3 and SPTSSA or SPTSSB. The heterodimer consisting of SPTLC1 and SPTLC2/SPTLC3 forms the catalytic core of the enzyme, while SPTSSA or SPTSSB subunits determine substrate specificity. SPT also interacts with ORMDL proteins, especially ORMDL3, which negatively regulate SPT activity in the presence of ceramides. Interacts with MBOAT7; the interaction plays a role in MBOAT7 localization to mitochondria-associated membranes.

The protein localises to the endoplasmic reticulum membrane. It functions in the pathway lipid metabolism; sphingolipid metabolism. In terms of biological role, component of the serine palmitoyltransferase multisubunit enzyme (SPT) that catalyzes the initial and rate-limiting step in sphingolipid biosynthesis by condensing L-serine and activated acyl-CoA (most commonly palmitoyl-CoA) to form long-chain bases. The SPT complex is composed of SPTLC1, SPTLC2 or SPTLC3 and SPTSSA or SPTSSB. Within this complex, the heterodimer consisting of SPTLC1 and SPTLC2/SPTLC3 forms the catalytic core. Within the SPT complex, SPTSSA stimulates the catalytic activity and plays a role in substrate specificity, which depends upon the overall complex composition. The SPTLC1-SPTLC2-SPTSSA complex shows a strong preference for C16-CoA substrate, while the SPTLC1-SPTLC3-SPTSSA isozyme uses both C14-CoA and C16-CoA as substrates, with a slight preference for C14-CoA. Independently of its action as a SPT component, may be involved in MBOAT7 localization to mitochondria-associated membranes, a membrane bridge between the endoplasmic reticulum and mitochondria, may hence affect MBOAT7-catalyzed incorporation of arachidonic acid into phosphatidylinositol. The protein is Serine palmitoyltransferase small subunit A of Homo sapiens (Human).